We begin with the raw amino-acid sequence, 245 residues long: 1-(5-phosphoribosyl)-5-[(5-phosphoribosylamino)methylideneamino] imidazole-4-carboxamide isomerase (245 aa).

The active-site Proton acceptor is Asp8. Asp130 serves as the catalytic Proton donor.

It belongs to the HisA/HisF family.

Its subcellular location is the cytoplasm. It catalyses the reaction 1-(5-phospho-beta-D-ribosyl)-5-[(5-phospho-beta-D-ribosylamino)methylideneamino]imidazole-4-carboxamide = 5-[(5-phospho-1-deoxy-D-ribulos-1-ylimino)methylamino]-1-(5-phospho-beta-D-ribosyl)imidazole-4-carboxamide. It participates in amino-acid biosynthesis; L-histidine biosynthesis; L-histidine from 5-phospho-alpha-D-ribose 1-diphosphate: step 4/9. In Pseudomonas savastanoi pv. phaseolicola (strain 1448A / Race 6) (Pseudomonas syringae pv. phaseolicola (strain 1448A / Race 6)), this protein is 1-(5-phosphoribosyl)-5-[(5-phosphoribosylamino)methylideneamino] imidazole-4-carboxamide isomerase.